Consider the following 195-residue polypeptide: 3-isopropylmalate dehydratase small subunit (195 aa).

It belongs to the LeuD family. LeuD type 1 subfamily. As to quaternary structure, heterodimer of LeuC and LeuD.

The enzyme catalyses (2R,3S)-3-isopropylmalate = (2S)-2-isopropylmalate. Its pathway is amino-acid biosynthesis; L-leucine biosynthesis; L-leucine from 3-methyl-2-oxobutanoate: step 2/4. In terms of biological role, catalyzes the isomerization between 2-isopropylmalate and 3-isopropylmalate, via the formation of 2-isopropylmaleate. The protein is 3-isopropylmalate dehydratase small subunit of Koribacter versatilis (strain Ellin345).